We begin with the raw amino-acid sequence, 424 residues long: Serine--tRNA ligase (424 aa).

L-serine is bound at residue 230–232; it reads TSE. ATP-binding positions include 261–263 and Val-277; that span reads RKE. Glu-284 lines the L-serine pocket. Position 348-351 (348-351) interacts with ATP; it reads ELTS. Thr-382 serves as a coordination point for L-serine.

It belongs to the class-II aminoacyl-tRNA synthetase family. Type-1 seryl-tRNA synthetase subfamily. As to quaternary structure, homodimer. The tRNA molecule binds across the dimer.

Its subcellular location is the cytoplasm. The enzyme catalyses tRNA(Ser) + L-serine + ATP = L-seryl-tRNA(Ser) + AMP + diphosphate + H(+). The catalysed reaction is tRNA(Sec) + L-serine + ATP = L-seryl-tRNA(Sec) + AMP + diphosphate + H(+). Its pathway is aminoacyl-tRNA biosynthesis; selenocysteinyl-tRNA(Sec) biosynthesis; L-seryl-tRNA(Sec) from L-serine and tRNA(Sec): step 1/1. In terms of biological role, catalyzes the attachment of serine to tRNA(Ser). Is also able to aminoacylate tRNA(Sec) with serine, to form the misacylated tRNA L-seryl-tRNA(Sec), which will be further converted into selenocysteinyl-tRNA(Sec). In Nocardioides sp. (strain ATCC BAA-499 / JS614), this protein is Serine--tRNA ligase.